The sequence spans 318 residues: Transcription factor MYBS3 (318 aa).

2 disordered regions span residues methionine 1–asparagine 20 and alanine 50–glutamate 98. Residues arginine 3–asparagine 20 form a CCHC-type zinc finger. Over residues cysteine 8–cysteine 18 the composition is skewed to polar residues. The span at alanine 50 to aspartate 77 shows a compositional bias: low complexity. The region spanning arginine 88–serine 144 is the HTH myb-type domain. The H-T-H motif DNA-binding region spans tryptophan 116–phenylalanine 140. A disordered region spans residues valine 159–aspartate 200.

Expressed in all tissues, with the highest level in senescent leaves.

Its subcellular location is the nucleus. Its function is as follows. Transcription repressor that binds to 5'-TATCCA-3' elements in gene promoters. Contributes to the sugar-repressed transcription of promoters containing SRS or 5'-TATCCA-3' elements. Transcription repressor involved in a cold stress response pathway that confers cold tolerance. Suppresses the DREB1-dependent signaling pathway under prolonged cold stress. DREB1 responds quickly and transiently while MYBS3 responds slowly to cold stress. They may act sequentially and complementarily for adaptation to short- and long-term cold stress. In Oryza sativa subsp. japonica (Rice), this protein is Transcription factor MYBS3.